The chain runs to 242 residues: MIYFHQVNKYYGDFHVLKDINLTIHQGEVVVIIGPSGSGKSTLVRCINRLETISSGELIVDNVKVNDKHIDINQLRRNIGMVFQHFNLYPHMTVLQNITLAPMKVLRIPEKEAKETAMYYLEKVGIPDKANAYPSELSGGQQQRVAIARGLAMKPKIMLFDEPTSALDPETIGEVLDVMKQLAKEGMTMVVVTHEMGFAREVADRIVFMDQGRILEEAPPEEFFSNPKEERAKVFLSRILNH.

In terms of domain architecture, ABC transporter spans 2-236 (IYFHQVNKYY…PKEERAKVFL (235 aa)). An ATP-binding site is contributed by 34-41 (GPSGSGKS).

This sequence belongs to the ABC transporter superfamily.

The protein localises to the cell membrane. Functionally, part of the binding-protein-dependent transport system for glutamine. Probably responsible for energy coupling to the transport system. This chain is Glutamine transport ATP-binding protein GlnQ (glnQ), found in Geobacillus stearothermophilus (Bacillus stearothermophilus).